The following is a 122-amino-acid chain: Atrial gland peptide B (122 aa).

Positions 1 to 21 are cleaved as a signal peptide; sequence MKANTMFIILCLTLSTLCVSS. Residues 22–34 constitute a propeptide that is removed on maturation; it reads QFTSVLGKIFVTN. I69 carries the isoleucine amide modification. Positions 73–122 are excised as a propeptide; sequence AAGGMEQSEGQNPETKSHSWRERSVLTPSLLSLGESLESGISKRISINQD. Residues 74 to 95 form a disordered region; it reads AGGMEQSEGQNPETKSHSWRER.

The protein belongs to the molluscan ELH family.

Its subcellular location is the secreted. The atrial gland peptide A and peptide B precursors are the source of the 2 peptides that, upon release from this reproductive system gland, initiate the egg-laying process by exciting the bag cell neurons. These neurons, clustered in neural connectives near the abdominal ganglion, in turn release other peptides that act directly on the ganglion and also, via the circulating hemolymph, on many other organs to control the physiological processes of egg-laying. One of these other peptides is the egg-laying hormone. In Aplysia californica (California sea hare), this protein is Atrial gland peptide B.